Here is a 361-residue protein sequence, read N- to C-terminus: Glutamine synthetase (361 aa).

The GS beta-grasp domain occupies 23–103 (CQAMYIWVDG…VLCETYKYNK (81 aa)). The GS catalytic domain occupies 110-361 (QRWKCMEVMT…LVRTICLNEQ (252 aa)). Glutamate 131 serves as a coordination point for ATP. 3 residues coordinate Mn(2+): glutamate 131, glutamate 133, and glutamate 200. 200–205 (EFQVGP) is a binding site for ATP. 243-244 (DW) provides a ligand contact to L-glutamate. Position 250 (histidine 250) interacts with Mn(2+). ATP is bound by residues 252–254 (NFS), arginine 316, and arginine 321. Arginine 316 is a binding site for L-glutamate. 333-335 (YLE) is a binding site for ADP. Glutamate 335 lines the Mn(2+) pocket. Arginine 337 contacts L-glutamate.

The protein belongs to the glutamine synthetase family. Requires Mg(2+) as cofactor. The cofactor is Mn(2+).

The protein resides in the cytoplasm. It is found in the cytosol. Its subcellular location is the microsome. It localises to the mitochondrion. The catalysed reaction is L-glutamate + NH4(+) + ATP = L-glutamine + ADP + phosphate + H(+). Functionally, glutamine synthetase that catalyzes the ATP-dependent conversion of glutamate and ammonia to glutamine. This chain is Glutamine synthetase, found in Panulirus argus (Caribbean spiny lobster).